The sequence spans 704 residues: Polyribonucleotide nucleotidyltransferase (704 aa).

Mg(2+) contacts are provided by aspartate 491 and aspartate 497. Residues 558-617 (PNYAVIEINSDKIRDVIGKGGATIRQLTEDTGAVIDIDDNGTIRIFGENKAATKEAIRQI) enclose the KH domain. An S1 motif domain is found at 627–695 (GKVYKGTVAR…NRGRIKLTMK (69 aa)).

Belongs to the polyribonucleotide nucleotidyltransferase family. Component of the RNA degradosome, which is a multiprotein complex involved in RNA processing and mRNA degradation. The cofactor is Mg(2+).

It is found in the cytoplasm. The catalysed reaction is RNA(n+1) + phosphate = RNA(n) + a ribonucleoside 5'-diphosphate. Its function is as follows. Involved in mRNA degradation. Catalyzes the phosphorolysis of single-stranded polyribonucleotides processively in the 3'- to 5'-direction. The polypeptide is Polyribonucleotide nucleotidyltransferase (Psychrobacter sp. (strain PRwf-1)).